The following is a 431-amino-acid chain: Ribosomal protein uS12 methylthiotransferase RimO (431 aa).

Residues 4–120 enclose the MTTase N-terminal domain; the sequence is LKLYVIVLGC…LAESINKTKK (117 aa). [4Fe-4S] cluster contacts are provided by C13, C49, C83, C150, C154, and C157. Residues 136 to 365 enclose the Radical SAM core domain; that stretch reads DSDLPYAYVK…MEVQAEISFL (230 aa). The region spanning 368–431 is the TRAM domain; that stretch reads QRLVGKVIDV…TYDLEGELVE (64 aa).

It belongs to the methylthiotransferase family. RimO subfamily. The cofactor is [4Fe-4S] cluster.

The protein localises to the cytoplasm. The catalysed reaction is L-aspartate(89)-[ribosomal protein uS12]-hydrogen + (sulfur carrier)-SH + AH2 + 2 S-adenosyl-L-methionine = 3-methylsulfanyl-L-aspartate(89)-[ribosomal protein uS12]-hydrogen + (sulfur carrier)-H + 5'-deoxyadenosine + L-methionine + A + S-adenosyl-L-homocysteine + 2 H(+). Functionally, catalyzes the methylthiolation of an aspartic acid residue of ribosomal protein uS12. This chain is Ribosomal protein uS12 methylthiotransferase RimO, found in Fervidobacterium nodosum (strain ATCC 35602 / DSM 5306 / Rt17-B1).